Consider the following 204-residue polypeptide: Golgi to ER traffic protein 1 (204 aa).

The Lumenal portion of the chain corresponds to 1-11; the sequence is MLTLDIDPYTI. Residues 12–31 traverse the membrane as a helical segment; it reads LVTSFLILAIQKLVTVIGKQ. The Cytoplasmic segment spans residues 32-116; that stretch reads KIQLYIWQIY…RIDSITKLAI (85 aa). Positions 78 to 113 form a coiled coil; the sequence is AKWTKINRALDKLKLEVQELNETIAGEKTRIDSITK. Residues 117 to 137 traverse the membrane as a helical segment; that stretch reads TLILTLPIWFLRIFCRKTALL. Residues 138-161 are Lumenal-facing; that stretch reads YIRKGILPAYLEWWLALPFFKSGT. A helical transmembrane segment spans residues 162–178; that stretch reads IGLTCWMFVVNSVLSNL. Residues 179-204 lie on the Cytoplasmic side of the membrane; the sequence is IFLISFPFTQKVERPIKPKNEQKTES.

The protein belongs to the WRB/GET1 family. As to quaternary structure, component of the Golgi to ER traffic (GET) complex, which is composed of GET1, GET2 and GET3. Within the complex, GET1 and GET2 form a heterotetramer which is stabilized by phosphatidylinositol binding and which binds to the GET3 homodimer.

It is found in the endoplasmic reticulum membrane. The protein resides in the golgi apparatus membrane. Functionally, required for the post-translational delivery of tail-anchored (TA) proteins to the endoplasmic reticulum. Together with GET2, acts as a membrane receptor for soluble GET3, which recognizes and selectively binds the transmembrane domain of TA proteins in the cytosol. The GET complex cooperates with the HDEL receptor ERD2 to mediate the ATP-dependent retrieval of resident ER proteins that contain a C-terminal H-D-E-L retention signal from the Golgi to the ER. This Lodderomyces elongisporus (strain ATCC 11503 / CBS 2605 / JCM 1781 / NBRC 1676 / NRRL YB-4239) (Yeast) protein is Golgi to ER traffic protein 1.